Reading from the N-terminus, the 550-residue chain is Epidermal growth factor-like protein 6 (550 aa).

Residues 1 to 18 form the signal peptide; it reads MQPPWGLALPLLLPWVTG. The 36-residue stretch at 55–90 folds into the EGF-like 1 domain; the sequence is NKGVCEAMCEPRCKFGECVGPNKCRCFPGYTGKTCT. Cystine bridges form between C59-C72, C63-C78, C80-C89, C96-C107, C103-C116, and C118-C130. Residues 92–131 form the EGF-like 2; calcium-binding domain; the sequence is DVNECGVKPRPCQHRCVNTHGSYKCFCLSGHMLLPDATCS. An EGF-like 3 domain is found at 135–171; it reads TCARLNCQYGCEDTEEGPRCVCPSSGLRLGPNGRVCL. The EGF-like 4; calcium-binding domain occupies 172–210; the sequence is DIDECASSKAVCPSNRRCVNTFGSYYCKCHIGFELKYIG. 5 disulfide bridges follow: C176–C189, C183–C198, C221–C234, C228–C243, and C245–C256. One can recognise an EGF-like 5; calcium-binding domain in the interval 217–257; it reads DINECALNTHPCSPHANCLNTRGSFKCKCKQGYRGNGLQCS. The disordered stretch occupies residues 295–354; that stretch reads KMVTPRPASTRVPKVNLPYSSEEGVSRGRNYDGEQKKKEEGKRERLEEEKGEKTLRNEVE. Basic and acidic residues predominate over residues 318–354; that stretch reads GVSRGRNYDGEQKKKEEGKRERLEEEKGEKTLRNEVE. Residues 327-357 adopt a coiled-coil conformation; sequence GEQKKKEEGKRERLEEEKGEKTLRNEVEQER. N-linked (GlcNAc...) asparagine glycosylation is present at N394. One can recognise an MAM domain in the interval 397–543; it reads VDCSFDLGVC…VLLVSGLCPD (147 aa).

The protein belongs to the nephronectin family. Expressed at basement membrane of pelage follicles (at protein level).

It localises to the secreted. The protein resides in the extracellular space. It is found in the extracellular matrix. Its subcellular location is the basement membrane. Functionally, may bind integrin alpha-8/beta-1 and play a role in hair follicle morphogenesis. Promotes matrix assembly. This Mus musculus (Mouse) protein is Epidermal growth factor-like protein 6 (Egfl6).